The chain runs to 546 residues: Undecaprenyl phosphate-alpha-4-amino-4-deoxy-L-arabinose arabinosyl transferase (546 aa).

The next 12 membrane-spanning stretches (helical) occupy residues 6-26 (INLA…PLGL), 87-107 (AASA…VGRF), 113-133 (AWVT…GTYS), 177-197 (LLTK…PFMI), 208-228 (WGWW…LAIH), 260-280 (YYLP…PSAI), 289-309 (SPLL…FSAA), 313-333 (LVTY…QGII), 345-365 (IGSV…IVLF), 380-400 (PWLL…SIKA), 410-430 (YMLM…NISI), and 450-467 (AILI…NWYF).

It belongs to the glycosyltransferase 83 family.

It localises to the cell inner membrane. The catalysed reaction is 4-amino-4-deoxy-alpha-L-arabinopyranosyl di-trans,octa-cis-undecaprenyl phosphate + lipid IVA = lipid IIA + di-trans,octa-cis-undecaprenyl phosphate.. Its pathway is lipopolysaccharide metabolism; 4-amino-4-deoxy-beta-L-arabinose-lipid A biosynthesis. Functionally, catalyzes the transfer of the L-Ara4N moiety of the glycolipid undecaprenyl phosphate-alpha-L-Ara4N to lipid A. The modified arabinose is attached to lipid A and is required for resistance to polymyxin and cationic antimicrobial peptides. In Shewanella sediminis (strain HAW-EB3), this protein is Undecaprenyl phosphate-alpha-4-amino-4-deoxy-L-arabinose arabinosyl transferase.